Consider the following 246-residue polypeptide: Uridylate kinase (246 aa).

Residue Lys-18–Gly-21 participates in ATP binding. Residue Gly-60 participates in UMP binding. ATP contacts are provided by Gly-61 and Arg-65. UMP-binding positions include Asp-80 and Thr-141 to Thr-148. ATP is bound by residues Thr-168, Tyr-174, and Asp-177.

Belongs to the UMP kinase family. As to quaternary structure, homohexamer.

The protein resides in the cytoplasm. The catalysed reaction is UMP + ATP = UDP + ADP. It functions in the pathway pyrimidine metabolism; CTP biosynthesis via de novo pathway; UDP from UMP (UMPK route): step 1/1. With respect to regulation, inhibited by UTP. Its function is as follows. Catalyzes the reversible phosphorylation of UMP to UDP. In Pseudomonas syringae pv. syringae (strain B728a), this protein is Uridylate kinase.